A 1088-amino-acid polypeptide reads, in one-letter code: RNA-directed RNA polymerase (1088 aa).

In terms of domain architecture, RdRp catalytic spans 501 to 687 (LSYGDVTRFL…AKRYIAGGKI (187 aa)).

The protein belongs to the reoviridae RNA-directed RNA polymerase family. As to quaternary structure, interacts with VP3 (Potential). Interacts with VP2; this interaction activates VP1. Interacts with NSP5; this interaction is probably necessary for the formation of functional virus factories. Interacts with NSP2; this interaction is weak. Requires Mg(2+) as cofactor.

It is found in the virion. It carries out the reaction RNA(n) + a ribonucleoside 5'-triphosphate = RNA(n+1) + diphosphate. Functionally, RNA-directed RNA polymerase that is involved in both transcription and genome replication. Together with VP3 capping enzyme, forms an enzyme complex positioned near the channels situated at each of the five-fold vertices of the core. Following infection, the outermost layer of the virus is lost, leaving a double-layered particle (DLP) made up of the core and VP6 shell. VP1 then catalyzes the transcription of fully conservative plus-strand genomic RNAs that are extruded through the DLP's channels into the cytoplasm where they function as mRNAs for translation of viral proteins. One copy of each of the viral (+)RNAs is also recruited during core assembly, together with newly synthesized polymerase complexes and VP2. The polymerase of these novo-formed particles catalyzes the synthesis of complementary minus-strands leading to dsRNA formation. To do so, the polymerase specifically recognizes and binds 4 bases 5'-UGUG-3' in the conserved 3'-sequence of plus-strand RNA templates. VP2 presumably activates the autoinhibited VP1-RNA complex to coordinate packaging and genome replication. Once dsRNA synthesis is complete, the polymerase switches to the transcriptional mode, thus providing secondary transcription. This is RNA-directed RNA polymerase from Rotavirus A (strain RVA/SA11-Both/G3P5B[2]) (RV-A).